The primary structure comprises 443 residues: Tubulin beta-2 chain (443 aa).

The short motif at 1 to 4 is the MREI motif element; that stretch reads MREI. Gln-11, Glu-69, Ser-138, Gly-142, Thr-143, Gly-144, Asn-204, and Asn-226 together coordinate GTP. A Mg(2+)-binding site is contributed by Glu-69. Glu-438 is subject to 5-glutamyl polyglutamate.

This sequence belongs to the tubulin family. As to quaternary structure, dimer of alpha and beta chains. A typical microtubule is a hollow water-filled tube with an outer diameter of 25 nm and an inner diameter of 15 nM. Alpha-beta heterodimers associate head-to-tail to form protofilaments running lengthwise along the microtubule wall with the beta-tubulin subunit facing the microtubule plus end conferring a structural polarity. Microtubules usually have 13 protofilaments but different protofilament numbers can be found in some organisms and specialized cells. Mg(2+) serves as cofactor. In terms of processing, some glutamate residues at the C-terminus are polyglycylated, resulting in polyglycine chains on the gamma-carboxyl group. Glycylation is mainly limited to tubulin incorporated into axonemes (cilia and flagella) whereas glutamylation is prevalent in neuronal cells, centrioles, axonemes, and the mitotic spindle. Both modifications can coexist on the same protein on adjacent residues, and lowering polyglycylation levels increases polyglutamylation, and reciprocally. The precise function of polyglycylation is still unclear. Post-translationally, some glutamate residues at the C-terminus are polyglutamylated, resulting in polyglutamate chains on the gamma-carboxyl group. Polyglutamylation plays a key role in microtubule severing by spastin (SPAST). SPAST preferentially recognizes and acts on microtubules decorated with short polyglutamate tails: severing activity by SPAST increases as the number of glutamates per tubulin rises from one to eight, but decreases beyond this glutamylation threshold. In terms of tissue distribution, nervous system specific.

The protein localises to the cytoplasm. It is found in the cytoskeleton. Its function is as follows. Tubulin is the major constituent of microtubules, a cylinder consisting of laterally associated linear protofilaments composed of alpha- and beta-tubulin heterodimers. Microtubules grow by the addition of GTP-tubulin dimers to the microtubule end, where a stabilizing cap forms. Below the cap, tubulin dimers are in GDP-bound state, owing to GTPase activity of alpha-tubulin. This is Tubulin beta-2 chain (tubb2) from Xenopus laevis (African clawed frog).